Here is a 332-residue protein sequence, read N- to C-terminus: Protoheme IX farnesyltransferase (332 aa).

Helical transmembrane passes span 63–83, 109–129, 132–152, 160–180, 188–208, 245–265, and 286–306; these read LICTLGGGALAAAAAGALNCL, TVFLGAVSCTLAAAMLLISGV, LAAGLTLLGLCSYVILYTIIL, IVFGGVAGAIPPLVGASAATG, WLFSLVMLWTPAHFWALAILL, ILGVFALPEGGILYLIMLLPF, and AKGLFRWSILYMFGICLLLLI.

It belongs to the UbiA prenyltransferase family. Protoheme IX farnesyltransferase subfamily.

The protein resides in the cell inner membrane. The catalysed reaction is heme b + (2E,6E)-farnesyl diphosphate + H2O = Fe(II)-heme o + diphosphate. Its pathway is porphyrin-containing compound metabolism; heme O biosynthesis; heme O from protoheme: step 1/1. In terms of biological role, converts heme B (protoheme IX) to heme O by substitution of the vinyl group on carbon 2 of heme B porphyrin ring with a hydroxyethyl farnesyl side group. The chain is Protoheme IX farnesyltransferase from Prochlorococcus marinus subsp. pastoris (strain CCMP1986 / NIES-2087 / MED4).